The following is a 201-amino-acid chain: Recombination protein RecR (201 aa).

The C4-type zinc-finger motif lies at 57–72 (CADCRTFTEQEKCNIC). Residues 81-176 (GQICVVESPA…DASRIAHGVP (96 aa)) enclose the Toprim domain.

Belongs to the RecR family.

Functionally, may play a role in DNA repair. It seems to be involved in an RecBC-independent recombinational process of DNA repair. It may act with RecF and RecO. This chain is Recombination protein RecR, found in Cronobacter sakazakii (strain ATCC BAA-894) (Enterobacter sakazakii).